The following is a 217-amino-acid chain: Probable GTP-binding protein EngB (217 aa).

One can recognise an EngB-type G domain in the interval 32 to 205 (GTPQIAFAGR…RKIVYSLIET (174 aa)). Residues 40 to 47 (GRSNAGKS), 67 to 71 (GKTKL), 85 to 88 (DLPG), 152 to 155 (TKID), and 184 to 186 (VSN) contribute to the GTP site. Serine 47 and threonine 69 together coordinate Mg(2+).

This sequence belongs to the TRAFAC class TrmE-Era-EngA-EngB-Septin-like GTPase superfamily. EngB GTPase family. Mg(2+) serves as cofactor.

Functionally, necessary for normal cell division and for the maintenance of normal septation. The chain is Probable GTP-binding protein EngB from Leptospira interrogans serogroup Icterohaemorrhagiae serovar copenhageni (strain Fiocruz L1-130).